The chain runs to 201 residues: Probable nicotinate-nucleotide adenylyltransferase (201 aa).

Belongs to the NadD family.

It catalyses the reaction nicotinate beta-D-ribonucleotide + ATP + H(+) = deamido-NAD(+) + diphosphate. Its pathway is cofactor biosynthesis; NAD(+) biosynthesis; deamido-NAD(+) from nicotinate D-ribonucleotide: step 1/1. In terms of biological role, catalyzes the reversible adenylation of nicotinate mononucleotide (NaMN) to nicotinic acid adenine dinucleotide (NaAD). This is Probable nicotinate-nucleotide adenylyltransferase from Neisseria gonorrhoeae (strain ATCC 700825 / FA 1090).